The sequence spans 1690 residues: DNA-directed RNA polymerase subunit beta' (1690 aa).

The Zn(2+) site is built by C63, C65, C78, and C81. Positions 753, 755, and 757 each coordinate Mg(2+). Zn(2+) is bound by residues C1107, C1295, C1302, and C1305.

The protein belongs to the RNA polymerase beta' chain family. In terms of assembly, the RNAP catalytic core consists of 2 alpha, 1 beta, 1 beta' and 1 omega subunit. When a sigma factor is associated with the core the holoenzyme is formed, which can initiate transcription. Mg(2+) serves as cofactor. Zn(2+) is required as a cofactor.

It catalyses the reaction RNA(n) + a ribonucleoside 5'-triphosphate = RNA(n+1) + diphosphate. Its function is as follows. DNA-dependent RNA polymerase catalyzes the transcription of DNA into RNA using the four ribonucleoside triphosphates as substrates. In Thermotoga neapolitana (strain ATCC 49049 / DSM 4359 / NBRC 107923 / NS-E), this protein is DNA-directed RNA polymerase subunit beta'.